Here is a 169-residue protein sequence, read N- to C-terminus: ATP synthase subunit b (169 aa).

A helical transmembrane segment spans residues 12–32 (HIYLGNALWYLICFAILLLLI).

It belongs to the ATPase B chain family. In terms of assembly, F-type ATPases have 2 components, F(1) - the catalytic core - and F(0) - the membrane proton channel. F(1) has five subunits: alpha(3), beta(3), gamma(1), delta(1), epsilon(1). F(0) has three main subunits: a(1), b(2) and c(10-14). The alpha and beta chains form an alternating ring which encloses part of the gamma chain. F(1) is attached to F(0) by a central stalk formed by the gamma and epsilon chains, while a peripheral stalk is formed by the delta and b chains.

The protein localises to the cell membrane. Functionally, f(1)F(0) ATP synthase produces ATP from ADP in the presence of a proton or sodium gradient. F-type ATPases consist of two structural domains, F(1) containing the extramembraneous catalytic core and F(0) containing the membrane proton channel, linked together by a central stalk and a peripheral stalk. During catalysis, ATP synthesis in the catalytic domain of F(1) is coupled via a rotary mechanism of the central stalk subunits to proton translocation. Its function is as follows. Component of the F(0) channel, it forms part of the peripheral stalk, linking F(1) to F(0). This Lactobacillus helveticus (strain DPC 4571) protein is ATP synthase subunit b.